Here is a 300-residue protein sequence, read N- to C-terminus: MSPCYGQNSAIAKGSWNREVLQEVQPIYHWHDFGQNMKEYSASPLEGDSSLPSSLPSSTEDCLLLSLENTITVIAGNQRQAYDSTSSTEEGTAPQLRPDEIADSTHCITSLVDPEFRDLINYGRQKGANPVFIESNTTEQSHSQCILGYPQKSHVAQLYHDPKVLSTISEGQTKRGSYHCSHCSEKFATLVEFAAHLDEFNLERPCKCPIEQCPWKILGFQQATGLRRHCASQHIGELDIEMEKSLNLKVEKYPGLNCPFPICQKTFRRKDAYKRHVAMVHNNADSRFNKRLKKILNNTK.

Polar residues predominate over residues 80–90 (QAYDSTSSTEE). The disordered stretch occupies residues 80–100 (QAYDSTSSTEEGTAPQLRPDE). 3 consecutive C2H2-type zinc fingers follow at residues 178-199 (YHCSHCSEKFATLVEFAAHLDE), 206-234 (CKCPIEQCPWKILGFQQATGLRRHCASQH), and 256-281 (LNCPFPICQKTFRRKDAYKRHVAMVH).

Its subcellular location is the nucleus. Functionally, involved in the control of meiosis. Represses the transcription of the IME1 gene thereby inhibiting cells from entering meiosis. But also activates the CLN2 gene thus promoting mitosis. The polypeptide is Zinc finger protein RME1 (RME1) (Saccharomyces cerevisiae (strain ATCC 204508 / S288c) (Baker's yeast)).